Reading from the N-terminus, the 137-residue chain is Large ribosomal subunit protein uL16 (137 aa).

This sequence belongs to the universal ribosomal protein uL16 family. Part of the 50S ribosomal subunit.

Binds 23S rRNA and is also seen to make contacts with the A and possibly P site tRNAs. This is Large ribosomal subunit protein uL16 from Spiroplasma citri.